Here is an 82-residue protein sequence, read N- to C-terminus: Delta-conotoxin-like CnVIA (82 aa).

An N-terminal signal peptide occupies residues 1 to 22 (MKLTCMMIVAVLFLTAWTFVTA). The propeptide occupies 23 to 49 (DDSRNGLENLSPKARHEMKNPEASKSN). 3 disulfide bridges follow: Cys54–Cys69, Cys61–Cys73, and Cys68–Cys78.

Belongs to the conotoxin O1 superfamily. As to expression, expressed by the venom duct.

Its subcellular location is the secreted. Delta-conotoxins bind to site 6 of voltage-gated sodium channels (Nav) and inhibit the inactivation process. This is Delta-conotoxin-like CnVIA from Conus consors (Singed cone).